The sequence spans 198 residues: Ribonuclease HII (198 aa).

One can recognise an RNase H type-2 domain in the interval 10–198; the sequence is QLVAGVDEVG…PVKRALGLAS (189 aa). A divalent metal cation-binding residues include D16, E17, and D108.

Belongs to the RNase HII family. Mn(2+) is required as a cofactor. Mg(2+) serves as cofactor.

It localises to the cytoplasm. It carries out the reaction Endonucleolytic cleavage to 5'-phosphomonoester.. Endonuclease that specifically degrades the RNA of RNA-DNA hybrids. The sequence is that of Ribonuclease HII from Shigella boydii serotype 18 (strain CDC 3083-94 / BS512).